We begin with the raw amino-acid sequence, 527 residues long: UvrABC system protein C (527 aa).

The region spanning Lys-9–Ile-87 is the GIY-YIG domain. The 36-residue stretch at Asp-191–Leu-226 folds into the UVR domain.

It belongs to the UvrC family. As to quaternary structure, interacts with UvrB in an incision complex.

The protein resides in the cytoplasm. In terms of biological role, the UvrABC repair system catalyzes the recognition and processing of DNA lesions. UvrC both incises the 5' and 3' sides of the lesion. The N-terminal half is responsible for the 3' incision and the C-terminal half is responsible for the 5' incision. The polypeptide is UvrABC system protein C (Methanococcus maripaludis (strain DSM 14266 / JCM 13030 / NBRC 101832 / S2 / LL)).